The sequence spans 434 residues: Eukaryotic peptide chain release factor subunit 1-1 (434 aa).

The protein belongs to the eukaryotic release factor 1 family. As to quaternary structure, heterodimer of two subunits, one of which binds GTP.

It is found in the cytoplasm. Directs the termination of nascent peptide synthesis (translation) in response to the termination codons UAA, UAG and UGA. Modulates plant growth and development. The sequence is that of Eukaryotic peptide chain release factor subunit 1-1 from Brassica oleracea var. botrytis (Cauliflower).